Consider the following 240-residue polypeptide: Biosynthetic peptidoglycan transglycosylase (240 aa).

The helical transmembrane segment at 15-35 (WMFYLGAVVAIAWLATQAFYF) threads the bilayer.

Belongs to the glycosyltransferase 51 family.

The protein resides in the cell inner membrane. It catalyses the reaction [GlcNAc-(1-&gt;4)-Mur2Ac(oyl-L-Ala-gamma-D-Glu-L-Lys-D-Ala-D-Ala)](n)-di-trans,octa-cis-undecaprenyl diphosphate + beta-D-GlcNAc-(1-&gt;4)-Mur2Ac(oyl-L-Ala-gamma-D-Glu-L-Lys-D-Ala-D-Ala)-di-trans,octa-cis-undecaprenyl diphosphate = [GlcNAc-(1-&gt;4)-Mur2Ac(oyl-L-Ala-gamma-D-Glu-L-Lys-D-Ala-D-Ala)](n+1)-di-trans,octa-cis-undecaprenyl diphosphate + di-trans,octa-cis-undecaprenyl diphosphate + H(+). It functions in the pathway cell wall biogenesis; peptidoglycan biosynthesis. Functionally, peptidoglycan polymerase that catalyzes glycan chain elongation from lipid-linked precursors. In Paraburkholderia xenovorans (strain LB400), this protein is Biosynthetic peptidoglycan transglycosylase.